The chain runs to 513 residues: Probable mannosyl-oligosaccharide alpha-1,2-mannosidase 1B (513 aa).

The N-terminal stretch at 1–21 (MHLSSLSLSLTALAIVSPSAA) is a signal peptide. N-linked (GlcNAc...) asparagine glycosylation is found at Asn-97, Asn-117, Asn-184, Asn-251, Asn-322, Asn-348, and Asn-368. Cys-334 and Cys-363 are oxidised to a cystine. The active-site Proton donor is the Glu-377. Thr-503 is a binding site for Ca(2+).

Belongs to the glycosyl hydrolase 47 family. Monomer. It depends on Ca(2+) as a cofactor. The cofactor is Mg(2+).

It is found in the cytoplasmic vesicle lumen. It carries out the reaction N(4)-(alpha-D-Man-(1-&gt;2)-alpha-D-Man-(1-&gt;2)-alpha-D-Man-(1-&gt;3)-[alpha-D-Man-(1-&gt;2)-alpha-D-Man-(1-&gt;3)-[alpha-D-Man-(1-&gt;2)-alpha-D-Man-(1-&gt;6)]-alpha-D-Man-(1-&gt;6)]-beta-D-Man-(1-&gt;4)-beta-D-GlcNAc-(1-&gt;4)-beta-D-GlcNAc)-L-asparaginyl-[protein] (N-glucan mannose isomer 9A1,2,3B1,2,3) + 4 H2O = N(4)-(alpha-D-Man-(1-&gt;3)-[alpha-D-Man-(1-&gt;3)-[alpha-D-Man-(1-&gt;6)]-alpha-D-Man-(1-&gt;6)]-beta-D-Man-(1-&gt;4)-beta-D-GlcNAc-(1-&gt;4)-beta-D-GlcNAc)-L-asparaginyl-[protein] (N-glucan mannose isomer 5A1,2) + 4 beta-D-mannose. The enzyme catalyses N(4)-(alpha-D-Man-(1-&gt;2)-alpha-D-Man-(1-&gt;2)-alpha-D-Man-(1-&gt;3)-[alpha-D-Man-(1-&gt;3)-[alpha-D-Man-(1-&gt;2)-alpha-D-Man-(1-&gt;6)]-alpha-D-Man-(1-&gt;6)]-beta-D-Man-(1-&gt;4)-beta-D-GlcNAc-(1-&gt;4)-beta-D-GlcNAc)-L-asparaginyl-[protein] (N-glucan mannose isomer 8A1,2,3B1,3) + 3 H2O = N(4)-(alpha-D-Man-(1-&gt;3)-[alpha-D-Man-(1-&gt;3)-[alpha-D-Man-(1-&gt;6)]-alpha-D-Man-(1-&gt;6)]-beta-D-Man-(1-&gt;4)-beta-D-GlcNAc-(1-&gt;4)-beta-D-GlcNAc)-L-asparaginyl-[protein] (N-glucan mannose isomer 5A1,2) + 3 beta-D-mannose. It functions in the pathway protein modification; protein glycosylation. In terms of biological role, involved in the maturation of Asn-linked oligosaccharides. Progressively trims alpha-1,2-linked mannose residues from Man(9)GlcNAc(2) to produce Man(5)GlcNAc(2). The polypeptide is Probable mannosyl-oligosaccharide alpha-1,2-mannosidase 1B (mns1B) (Aspergillus niger (strain ATCC MYA-4892 / CBS 513.88 / FGSC A1513)).